The chain runs to 357 residues: Peptide chain release factor 1 (357 aa).

The residue at position 236 (Gln-236) is an N5-methylglutamine.

This sequence belongs to the prokaryotic/mitochondrial release factor family. Post-translationally, methylated by PrmC. Methylation increases the termination efficiency of RF1.

The protein localises to the cytoplasm. Functionally, peptide chain release factor 1 directs the termination of translation in response to the peptide chain termination codons UAG and UAA. This is Peptide chain release factor 1 from Mycolicibacterium paratuberculosis (strain ATCC BAA-968 / K-10) (Mycobacterium paratuberculosis).